Here is a 452-residue protein sequence, read N- to C-terminus: Phosphatidylserine synthase 2 (452 aa).

The Cytoplasmic portion of the chain corresponds to 1-35 (MAKGEWKRSGADDLPLPGRSECEVFDDGTNTFFWR). The chain crosses the membrane as a helical span at residues 36 to 56 (AHTVTVLFILTCALVYVTLLE). Residues 57 to 69 (ETPHDTAYNTKRG) lie on the Lumenal side of the membrane. A helical transmembrane segment spans residues 70–90 (IVASILVFLCFGVTQAKDGPF). The Cytoplasmic portion of the chain corresponds to 91–99 (TRPHPAYWR). A helical membrane pass occupies residues 100 to 120 (FWLCVSVVYELFLIFILFQTV). Topologically, residues 121–286 (HDGRQFMKYI…EWRPASNLRR (166 aa)) are lumenal. The helical transmembrane segment at 287 to 307 (WLAVLGIIFMFLLAELNTFYL) threads the bilayer. Position 308 (Lys-308) is a topological domain, cytoplasmic. A helical transmembrane segment spans residues 309–329 (FVMWMPPEHYLVLFRLVFFVN). The Lumenal portion of the chain corresponds to 330–349 (VGGVAMREIYDFMDDPKFHK). Residues 350 to 370 (KLGQQAWIVAAITVTEFLIVV) traverse the membrane as a helical segment. The Cytoplasmic segment spans residues 371–376 (KYDPNT). The helical transmembrane segment at 377–397 (IMLPIPFFITQCWILGIALIL) threads the bilayer. The Lumenal portion of the chain corresponds to 398 to 452 (VWTLWRFFIRDITLRYKETRRRRQEVSSERDGSSSAPSGRSKLNGSMDSVRHRKS). The disordered stretch occupies residues 419 to 452 (RRQEVSSERDGSSSAPSGRSKLNGSMDSVRHRKS). Positions 430-444 (SSSAPSGRSKLNGSM) are enriched in polar residues.

The protein belongs to the phosphatidyl serine synthase family.

The protein localises to the endoplasmic reticulum membrane. The catalysed reaction is a 1,2-diacyl-sn-glycero-3-phosphoethanolamine + L-serine = a 1,2-diacyl-sn-glycero-3-phospho-L-serine + ethanolamine. The enzyme catalyses 1-hexadecanoyl-2-(9Z-octadecenoyl)-sn-glycero-3-phosphoethanolamine + L-serine = 1-hexadecanoyl-2-(9Z-octadecenoyl)-sn-glycero-3-phospho-L-serine + ethanolamine. It catalyses the reaction 1-hexadecanoyl-2-(4Z,7Z,10Z,13Z,16Z,19Z-docosahexaenoyl)-sn-glycero-3-phosphoethanolamine + L-serine = 1-hexadecanoyl-2-(4Z,7Z,10Z,13Z,16Z,19Z-docosahexaenoyl)-sn-glycero-3-phosphoserine + ethanolamine. It carries out the reaction 1-octadecanoyl-2-(5Z,8Z,11Z,14Z)-eicosatetraenoyl-sn-glycero-3-phosphoethanolamine + L-serine = 1-octadecanoyl-2-(5Z,8Z,11Z,14Z)-eicosatetraenoyl-sn-glycero-3-phosphoserine + ethanolamine. The catalysed reaction is 1-octadecanoyl-2-(4Z,7Z,10Z,13Z,16Z,19Z-docosahexaenoyl)-sn-glycero-3-phosphoethanolamine + L-serine = 1-octadecanoyl-2-(4Z,7Z,10Z,13Z,16Z,19Z-docosahexaenoyl)-sn-glycero-3-phosphoserine + ethanolamine. The enzyme catalyses 1-(1Z-octadecenyl)-2-(4Z,7Z,10Z,13Z,16Z,19Z-docosahexaenoyl)-sn-glycero-3-phosphoethanolamine + L-serine = 1-(1Z-octadecenyl)-2-(4Z,7Z,10Z,13Z,16Z,19Z-docosahexaenoyl)-sn-glycero-3-phospho-L-serine + ethanolamine. It catalyses the reaction 1-octadecanoyl-2-(9Z-octadecenoyl)-sn-glycero-3-phosphoethanolamine + L-serine = 1-octadecanoyl-2-(9Z-octadecenoyl)-sn-glycero-3-phospho-L-serine + ethanolamine. It carries out the reaction 1-(1Z-octadecenyl)-2-(9Z-octadecenoyl)-sn-glycero-3-phosphoethanolamine + L-serine = 1-(1Z-octadecenyl)-2-(9Z-octadecenoyl)-sn-glycero-3-phospho-L-serine + ethanolamine. The catalysed reaction is 1-(1Z-octadecenyl)-2-(5Z,8Z,11Z,14Z- eicosatetraenoyl)-sn-glycero-3-phosphoethanolamine + L-serine = 1-(1Z-octadecenyl)-2-(5Z,8Z,11Z,14Z-eicosatetraenoyl)-sn-glycero-3-phospho-L-serine + ethanolamine. It functions in the pathway phospholipid metabolism; phosphatidylserine biosynthesis. Its function is as follows. Catalyzes a base-exchange reaction in which the polar head group of phosphatidylethanolamine (PE) or phosphatidylcholine (PC) is replaced by L-serine. Catalyzes the conversion of phosphatatidylethanolamine and does not act on phosphatidylcholine. Can utilize both phosphatidylethanolamine (PE) plasmalogen and diacyl PE as substrate and the latter is six times better utilized, indicating the importance of an ester linkage at the sn-1 position. Although it shows no sn-1 fatty acyl preference, exhibits significant preference towards docosahexaenoic acid (22:6n-3) compared with 18:1 or 20:4 at the sn-2 position. This chain is Phosphatidylserine synthase 2 (ptdss2), found in Danio rerio (Zebrafish).